The chain runs to 127 residues: Small ribosomal subunit protein uS12 (127 aa).

The tract at residues 8 to 28 is disordered; sequence IRTEREKARQKTKSPALKQCP. Aspartate 89 carries the post-translational modification 3-methylthioaspartic acid. The tract at residues 102 to 127 is disordered; it reads LDTAGVKDRKQGRSKYGTKRPKEAKK. Residues 113-127 show a composition bias toward basic residues; that stretch reads GRSKYGTKRPKEAKK.

This sequence belongs to the universal ribosomal protein uS12 family. Part of the 30S ribosomal subunit. Contacts proteins S8 and S17. May interact with IF1 in the 30S initiation complex.

With S4 and S5 plays an important role in translational accuracy. Functionally, interacts with and stabilizes bases of the 16S rRNA that are involved in tRNA selection in the A site and with the mRNA backbone. Located at the interface of the 30S and 50S subunits, it traverses the body of the 30S subunit contacting proteins on the other side and probably holding the rRNA structure together. The combined cluster of proteins S8, S12 and S17 appears to hold together the shoulder and platform of the 30S subunit. The sequence is that of Small ribosomal subunit protein uS12 from Nostoc sp. (strain PCC 7120 / SAG 25.82 / UTEX 2576).